Reading from the N-terminus, the 728-residue chain is Catalase-peroxidase 1 (728 aa).

Positions 91–218 (WHSAGTYRTA…LAAVQMGLIY (128 aa)) form a cross-link, tryptophyl-tyrosyl-methioninium (Trp-Tyr) (with M-244). His92 acts as the Proton acceptor in catalysis. The segment at residues 218-244 (YVNPEGPDGNPDPVAAAHDIRETFARM) is a cross-link (tryptophyl-tyrosyl-methioninium (Tyr-Met) (with W-91)). His259 is a binding site for heme b.

Belongs to the peroxidase family. Peroxidase/catalase subfamily. As to quaternary structure, homodimer or homotetramer. Requires heme b as cofactor. Formation of the three residue Trp-Tyr-Met cross-link is important for the catalase, but not the peroxidase activity of the enzyme.

It carries out the reaction H2O2 + AH2 = A + 2 H2O. The catalysed reaction is 2 H2O2 = O2 + 2 H2O. Its function is as follows. Bifunctional enzyme with both catalase and broad-spectrum peroxidase activity. The protein is Catalase-peroxidase 1 of Burkholderia cenocepacia (strain ATCC BAA-245 / DSM 16553 / LMG 16656 / NCTC 13227 / J2315 / CF5610) (Burkholderia cepacia (strain J2315)).